The sequence spans 147 residues: D-aminoacyl-tRNA deacylase (147 aa).

The Gly-cisPro motif, important for rejection of L-amino acids signature appears at 136-137 (GP).

Belongs to the DTD family. As to quaternary structure, homodimer.

Its subcellular location is the cytoplasm. The enzyme catalyses glycyl-tRNA(Ala) + H2O = tRNA(Ala) + glycine + H(+). It carries out the reaction a D-aminoacyl-tRNA + H2O = a tRNA + a D-alpha-amino acid + H(+). In terms of biological role, an aminoacyl-tRNA editing enzyme that deacylates mischarged D-aminoacyl-tRNAs. Also deacylates mischarged glycyl-tRNA(Ala), protecting cells against glycine mischarging by AlaRS. Acts via tRNA-based rather than protein-based catalysis; rejects L-amino acids rather than detecting D-amino acids in the active site. By recycling D-aminoacyl-tRNA to D-amino acids and free tRNA molecules, this enzyme counteracts the toxicity associated with the formation of D-aminoacyl-tRNA entities in vivo and helps enforce protein L-homochirality. This is D-aminoacyl-tRNA deacylase from Streptococcus agalactiae serotype III (strain NEM316).